Here is a 438-residue protein sequence, read N- to C-terminus: DNA polymerase IV 1 (438 aa).

The 181-residue stretch at 46 to 226 folds into the UmuC domain; sequence LAHIDCDAFY…KPVTMIWGVG (181 aa). Mg(2+) contacts are provided by D50 and D143. E144 is a catalytic residue.

Belongs to the DNA polymerase type-Y family. As to quaternary structure, monomer. It depends on Mg(2+) as a cofactor.

It localises to the cytoplasm. It carries out the reaction DNA(n) + a 2'-deoxyribonucleoside 5'-triphosphate = DNA(n+1) + diphosphate. Its function is as follows. Poorly processive, error-prone DNA polymerase involved in untargeted mutagenesis. Copies undamaged DNA at stalled replication forks, which arise in vivo from mismatched or misaligned primer ends. These misaligned primers can be extended by PolIV. Exhibits no 3'-5' exonuclease (proofreading) activity. May be involved in translesional synthesis, in conjunction with the beta clamp from PolIII. This Mesorhizobium japonicum (strain LMG 29417 / CECT 9101 / MAFF 303099) (Mesorhizobium loti (strain MAFF 303099)) protein is DNA polymerase IV 1 (dinB1).